A 316-amino-acid polypeptide reads, in one-letter code: Transaldolase 1 (316 aa).

K131 (schiff-base intermediate with substrate) is an active-site residue.

Belongs to the transaldolase family. Type 1 subfamily. In terms of assembly, homodimer.

Its subcellular location is the cytoplasm. It catalyses the reaction D-sedoheptulose 7-phosphate + D-glyceraldehyde 3-phosphate = D-erythrose 4-phosphate + beta-D-fructose 6-phosphate. The protein operates within carbohydrate degradation; pentose phosphate pathway; D-glyceraldehyde 3-phosphate and beta-D-fructose 6-phosphate from D-ribose 5-phosphate and D-xylulose 5-phosphate (non-oxidative stage): step 2/3. Its function is as follows. Transaldolase is important for the balance of metabolites in the pentose-phosphate pathway. The protein is Transaldolase 1 of Pectobacterium atrosepticum (strain SCRI 1043 / ATCC BAA-672) (Erwinia carotovora subsp. atroseptica).